The sequence spans 75 residues: Alpha-elapitoxin-Bc2b (75 aa).

The N-terminal stretch at 1–2 (YT) is a signal peptide. Cystine bridges form between Cys-5-Cys-24, Cys-17-Cys-45, Cys-30-Cys-34, Cys-49-Cys-60, and Cys-61-Cys-66.

As to quaternary structure, monomer in solution, homodimer in crystal state. Expressed by the venom gland.

The protein resides in the secreted. Its function is as follows. Binds to muscular and neuronal nicotinic acetylcholine receptor (nAChR) and inhibits acetylcholine from binding to the receptor, thereby impairing neuromuscular and neuronal transmission. Blocks muscle type nAChR. Also binds with high affinity to alpha-7/CHRNA7 nAChRs. In addition, shows a weak inhibition of neuronal alpha-3-beta-2/CHRNA3-CHRNB2 nAChR. Selectively binds to alpha-1-delta subunit interface of the mouse muscle nicotinic acetylcholine receptor, with a 10-fold higher affinity for the adult than for the fetal receptors. In vivo, when intraperitoneally injected into mice, causes flaccid paralysis and respiratory distress, followed by death within 2-4 hours. This chain is Alpha-elapitoxin-Bc2b, found in Bungarus candidus (Malayan krait).